We begin with the raw amino-acid sequence, 417 residues long: Gamma-glutamyl phosphate reductase (417 aa).

Belongs to the gamma-glutamyl phosphate reductase family.

The protein resides in the cytoplasm. It catalyses the reaction L-glutamate 5-semialdehyde + phosphate + NADP(+) = L-glutamyl 5-phosphate + NADPH + H(+). The protein operates within amino-acid biosynthesis; L-proline biosynthesis; L-glutamate 5-semialdehyde from L-glutamate: step 2/2. Its function is as follows. Catalyzes the NADPH-dependent reduction of L-glutamate 5-phosphate into L-glutamate 5-semialdehyde and phosphate. The product spontaneously undergoes cyclization to form 1-pyrroline-5-carboxylate. The polypeptide is Gamma-glutamyl phosphate reductase (Desulfitobacterium hafniense (strain Y51)).